A 425-amino-acid polypeptide reads, in one-letter code: UPF0597 protein VP2173 (425 aa).

It belongs to the UPF0597 family.

This is UPF0597 protein VP2173 from Vibrio parahaemolyticus serotype O3:K6 (strain RIMD 2210633).